The sequence spans 473 residues: Cell division protein FtsP (473 aa).

Positions methionine 1–alanine 27 form a signal peptide, tat-type signal.

The protein belongs to the FtsP family. Predicted to be exported by the Tat system. The position of the signal peptide cleavage has not been experimentally proven.

Its subcellular location is the periplasm. Cell division protein that is required for growth during stress conditions. May be involved in protecting or stabilizing the divisomal assembly under conditions of stress. The sequence is that of Cell division protein FtsP from Photorhabdus laumondii subsp. laumondii (strain DSM 15139 / CIP 105565 / TT01) (Photorhabdus luminescens subsp. laumondii).